The sequence spans 377 residues: RIB43A-like with coiled-coils protein 2 (377 aa).

Coiled coils occupy residues 217-250 (NKNQALESAEKKIQERKQEQEDNLAEISNMLRGD) and 282-308 (EEIRLVQRQQVQEKLRLQEEERQRDMD).

This sequence belongs to the RIB43A family. In terms of assembly, microtubule inner protein component of sperm flagellar doublet microtubules. In terms of tissue distribution, expressed in trachea multiciliated cells.

Its subcellular location is the cytoplasm. It localises to the cytoskeleton. The protein resides in the cilium axoneme. It is found in the flagellum axoneme. Microtubule inner protein (MIP) part of the dynein-decorated doublet microtubules (DMTs) in cilia axoneme, which is required for motile cilia beating. The sequence is that of RIB43A-like with coiled-coils protein 2 from Bos taurus (Bovine).